The sequence spans 181 residues: Glucose-1-phosphate adenylyltransferase large subunit 2 (181 aa).

This sequence belongs to the bacterial/plant glucose-1-phosphate adenylyltransferase family. In terms of assembly, heterotetramer. In terms of tissue distribution, leaves.

The protein localises to the plastid. Its subcellular location is the chloroplast. It is found in the amyloplast. The catalysed reaction is alpha-D-glucose 1-phosphate + ATP + H(+) = ADP-alpha-D-glucose + diphosphate. Its pathway is glycan biosynthesis; starch biosynthesis. Highly active without 3'phosphoglycerate, and is only slightly affected by the activator 3'phosphoglycerate and inhibitor orthophosphate. This protein plays a role in synthesis of starch. It catalyzes the synthesis of the activated glycosyl donor, ADP-glucose from Glc-1-P and ATP. This chain is Glucose-1-phosphate adenylyltransferase large subunit 2, found in Hordeum vulgare (Barley).